Here is a 1765-residue protein sequence, read N- to C-terminus: MRRSKADVERYVASVLGLTPSPRQKSMKGFYFAKLYYEAKEYDLAKKYICTYINVQERDPKAHRFLGLLYELEENTEKAVECYRRSVELNPTQKDLVLKIAELLCKNDVTDGRAKYWVERAAKLFPGSPAIYKLKEQLLDCEGEDGWNKLFDLIQSELYVRPDDVHVNIRLVELYRSTKRLKDAVAHCHEAERNIALRSSLEWNSCVVQTLKEYLESLQCLESDKSDWRATNTDLLLAYANLMLLTLSTRDVQENRELLESFDSALQSAKSSLGGNDELSATFLEMKGHFYMYAGSLLLKMGQHGNNVQWRALSELAALCYLIAFQVPRPKIKLREGKAGQNLLEMMACDRLSQSGHMLLSLSRGKQDFLKEVVETFANKIGQSALYDALFSSQSPKDTSFLGSDDIGKIDVQEPELEDLARYDVGAIRAHNGSLQHLTWLGLQWNSLPALPGIRKWLKQLFHRLPHETSRLETNAPESICILDLEVFLLGVVYTSHLQLKEKCNSHHSSYQPLCLPFPVCKQLCTERQKSWWDAVCTLIHRKAVPGNLAKLRLLVQHEINTLRAQEKHGLQPALLVHWAKYLQKTGSGLNSFYGQLEYIGRSVHYWKKVLPLLKIIKKNSIPEPIDPLFKHFHSVDIQASEIVEYEEDAHITFAILDAVNGNIEDAVTAFESIKSVVSYWNLALIFHRKAEDIENDALSPEEQEECRNYLTKTRDYLIKIIDDGDSNLSVVKKLPVPLESVKQMLNSVMQELEDYSEGGPLYKNGSLRNADSEIKHSTPSPTKYSLSPSKSYKYSPETPPRWTEDRNSLLNMICQQVEAIKKEMQELKLNSSKSASRHRWPTENYGPDSVPDGYQGSQTFHGAPLTVATTGPSVYYSQSPAYNSQYLLRPAANVTPTKGSSNTEFKSTKEGFSIPVSADGFKFGISEPGNQEKKREKPLENDTGLQAQDIRGRKKGRGVIFGQTSSTFTFADVAKSTSGEGFQFGKKDLNFKGFSGAGEKLFSSRYGKMANKANTSGDFEKDDDAYKTEDSDDIHFEPVVQMPEKVELVTGEEGEKVLYSQGVKLFRFDAEVRQWKERGLGNLKILKNEVNGKLRMLMRREQVLKVCANHWITTTMNLKPLSGSDRAWMWSASDFSDGDAKLERLAAKFKTPELAEEFKQKFEECQRLLLDIPLQTPHKLVDTGRAAKLIQRAEEMKSGLKDFKTFLTNDQTKVTEEENKGSGTGVAGASDTTIKPNAENTGPTLEWDNYDLREDALDDSVSSSSVHASPLASSPVRKNLFRFDESTTGSNFSFKSALSLSKSPAKLNQSGTSVGTDEESVVTQEEERDGQYFEPVVPLPDLVEVSSGEENEQVVFSHRAEIYRYDKDVGQWKERGIGDIKILQNYDNKQVRIVMRRDQVLKLCANHRITPDMSLQNMKGTERVWVWTACDFADGERKVEHLAVRFKLQDVADSFKKIFDEAKTAQEKDSLITPHVSRSSTPRESPCGKIAVAVLEEITRERTDVIQGDDVADAASEVEVSSTSETTTKAVVSPPKFVFVSESVKRIFSSEKSKPFAFGNSSATGSLFGFSFNAPLKSNNSETSSVAQSGSESKVEPKKCELSKNSDIEQSSDSKVKNLSASFPTEESSINYTFKTPEKEPPLWHAEFTKEELVQKLRSTTKSADHLNGLLREIEATNAVLMEQIKLLKSEIRRLERNQEREKSAANLEYLKNVLLQFIFLKPGSERERLLPVINTMLQLSPEEKGKLAAVAQDEEENPSRSSG.

A Phosphothreonine modification is found at threonine 19. Serine 21 carries the post-translational modification Phosphoserine. 3 TPR repeats span residues 26-59, 60-93, and 648-681; these read SMKG…QERD, PKAH…NPTQ, and EDAH…VSYW. A disordered region spans residues 760-804; sequence GPLYKNGSLRNADSEIKHSTPSPTKYSLSPSKSYKYSPETPPRWT. Residues 778 to 797 are compositionally biased toward low complexity; that stretch reads STPSPTKYSLSPSKSYKYSP. A RanBD1 1 domain is found at 1036–1172; it reads HFEPVVQMPE…FEECQRLLLD (137 aa). Disordered stretches follow at residues 1216 to 1247 and 1306 to 1330; these read TEEE…PTLE and AKLN…EERD. The segment covering 1231–1244 has biased composition (polar residues); sequence SDTTIKPNAENTGP. Over residues 1317-1329 the composition is skewed to acidic residues; the sequence is TDEESVVTQEEER. The 137-residue stretch at 1333-1469 folds into the RanBD1 2 domain; the sequence is YFEPVVPLPD…FDEAKTAQEK (137 aa). Polar residues predominate over residues 1580 to 1593; that stretch reads NNSETSSVAQSGSE. Disordered stretches follow at residues 1580 to 1621 and 1746 to 1765; these read NNSE…KNLS and KGKL…RSSG. The span at 1594 to 1617 shows a compositional bias: basic and acidic residues; sequence SKVEPKKCELSKNSDIEQSSDSKV. One can recognise a GRIP domain in the interval 1702–1752; sequence REKSAANLEYLKNVLLQFIFLKPGSERERLLPVINTMLQLSPEEKGKLAAV.

Interacts with GTP-bound ARL1.

This Homo sapiens (Human) protein is RANBP2-like and GRIP domain-containing protein 8 (RGPD8).